The primary structure comprises 427 residues: MTLAILAVFSVALTLLGFVLPPQGVKRATLLGLALALASLLLTWGKPFAFGPYAVDGVSQVFTLLALLGALWTVGLVRSGRFEFYLLVLYAALGMHLLASTRHLLLMLVALEALSLPLYALATWRRGQGLEAALKYFLLGALAAAFFLYGAALFYGATGSLVLGAPGEGPLYALALGLLLVGLGFKAALAPFHFWTPDVYQGSPTPVVLFMATSVKAAAFAALLRVAAPPEALALLVALSVVVGNLAALAQKEAKRLLAYSSIAHAGYMALALYTGNAQALGFYLLTYVLATGLAFAVLSQISPDRVPLEALRGLYRKDPLLGLAFLVAMLSLLGLPPLAGFWGKYLAFAEAARAGAWGVLVLALVTSAVSAYYYLGLGLAVFARPEETPFRPGPPWARAAVVAAGVLLLALGLLPGLVLPALAAGG.

14 consecutive transmembrane segments (helical) span residues 1–21, 30–50, 57–77, 79–99, 104–124, 137–157, 172–192, 204–224, 230–250, 257–277, 280–300, 322–342, 360–380, and 400–420; these read MTLA…FVLP, LLGL…PFAF, GVSQ…VGLV, SGRF…HLLA, LLLM…LATW, FLLG…FYGA, YALA…LAPF, PTPV…AALL, PEAL…AALA, LLAY…YTGN, ALGF…AVLS, LGLA…LAGF, VLVL…GLGL, and AAVV…GLVL.

This sequence belongs to the complex I subunit 2 family. NDH-1 is composed of 15 different subunits, Nqo1 to Nqo15. The complex has a L-shaped structure, with the hydrophobic arm (subunits Nqo7, Nqo8 and Nqo10 to Nqo14) embedded in the membrane and the hydrophilic peripheral arm (subunits Nqo1 to Nqo6, Nqo9 and Nqo15) protruding into the bacterial cytoplasm. The hydrophilic domain contains all the redox centers.

It localises to the cell inner membrane. The catalysed reaction is a quinone + NADH + 5 H(+)(in) = a quinol + NAD(+) + 4 H(+)(out). NDH-1 shuttles electrons from NADH, via FMN and iron-sulfur (Fe-S) centers, to quinones in the respiratory chain. The immediate electron acceptor for the enzyme in this species is menaquinone. Couples the redox reaction to proton translocation (for every two electrons transferred, four hydrogen ions are translocated across the cytoplasmic membrane), and thus conserves the redox energy in a proton gradient required for the synthesis of ATP. In Thermus thermophilus (strain ATCC 27634 / DSM 579 / HB8), this protein is NADH-quinone oxidoreductase subunit 14 (nqo14).